A 379-amino-acid polypeptide reads, in one-letter code: Alcohol dehydrogenase 2 (379 aa).

The Zn(2+) site is built by Cys-47, Thr-49, His-69, Cys-99, Cys-102, Cys-105, Cys-113, and Cys-177. Positions 49 and 69 each coordinate an alcohol. Thr-49 lines the NAD(+) pocket. NAD(+) contacts are provided by residues Gly-202 to Gly-207, Asp-226, Lys-231, Thr-272, Val-295, Val-295 to Val-297, Phe-322, and Arg-372.

It belongs to the zinc-containing alcohol dehydrogenase family. As to quaternary structure, homodimer. Zn(2+) is required as a cofactor.

It is found in the cytoplasm. The enzyme catalyses a primary alcohol + NAD(+) = an aldehyde + NADH + H(+). The catalysed reaction is a secondary alcohol + NAD(+) = a ketone + NADH + H(+). In Zea mays (Maize), this protein is Alcohol dehydrogenase 2 (ADH2).